The following is a 370-amino-acid chain: Protein FAM110B (370 aa).

2 disordered regions span residues 127 to 151 (SSEGSSSGSGHKHSSRNWPPHRSEA) and 237 to 256 (KSPEADPVEPACGVSRRPSL). Phosphoserine is present on residues Ser238 and Ser301. Residues 317-337 (DCEQSQDSNSDLRNDDSANDR) form a disordered region. Residues 326–335 (SDLRNDDSAN) are compositionally biased toward basic and acidic residues.

It belongs to the FAM110 family. Detected in thyroid, spleen and testis, and at lower levels in stomach, spinal cord, lymph node, trachea, adrenal gland, prostate, ovary and intestine.

It localises to the cytoplasm. The protein resides in the cytoskeleton. The protein localises to the microtubule organizing center. It is found in the centrosome. May be involved in tumor progression. This chain is Protein FAM110B (FAM110B), found in Homo sapiens (Human).